Consider the following 368-residue polypeptide: Transmembrane protein 26 (368 aa).

3 helical membrane passes run 4 to 24, 36 to 56, and 65 to 85; these read LVFLNALATRLLFLLHSLVGV, YWLLALLNLLLFLETALTLKF, and FSPAIFLYLISIVPSLWLLEL. N-linked (GlcNAc...) asparagine glycosylation is present at N110. The next 5 helical transmembrane spans lie at 150–170, 177–197, 208–228, 257–277, and 281–301; these read QTFLLMLIIGRWLLPIGGGIT, LLLMFVGTAADILEFTSETLE, VYAILVIWTWSMLQFPLDLAV, IGISVFIQDGPFLVVRLILMT, and VINQMLVFFAAKNFLVVVLQL. The disordered stretch occupies residues 324–368; that stretch reads GEHGCRAQTSESGPSQRDWQNESKEGLAIPLRGSPVTSDDSHHTP. The span at 330-341 shows a compositional bias: polar residues; it reads AQTSESGPSQRD.

The protein resides in the membrane. In Homo sapiens (Human), this protein is Transmembrane protein 26 (TMEM26).